We begin with the raw amino-acid sequence, 252 residues long: 14-3-3-like protein GF14 omicron (252 aa).

A phosphoserine mark is found at serine 65 and serine 188.

Belongs to the 14-3-3 family.

The protein resides in the nucleus. Its subcellular location is the cytoplasm. Its function is as follows. Is associated with a DNA binding complex that binds to the G box, a well-characterized cis-acting DNA regulatory element found in plant genes. The protein is 14-3-3-like protein GF14 omicron (GRF11) of Arabidopsis thaliana (Mouse-ear cress).